Consider the following 718-residue polypeptide: Heme peroxidase 2 (718 aa).

The signal sequence occupies residues 1-19; sequence MNLKPTILLFTILFLKCAT. Positions 20-146 are excised as a propeptide; sequence FEVNEETERI…QANRRCSSPP (127 aa). Disordered regions lie at residues 41 to 64 and 108 to 144; these read RASE…ANSD and LLQS…RCSS. Positions 45-64 are enriched in polar residues; sequence NSESEQTSQHIIVSQQANSD. Positions 109–118 are enriched in low complexity; the sequence is LQSSETTTTT. Residues 126–139 are compositionally biased toward basic residues; sequence SKRSAIFRSKRQAN. A disulfide bond links Cys-149 and Cys-164. The active-site Proton acceptor is the His-241. Asp-242 serves as a coordination point for Ca(2+). Cys-262 and Cys-272 are oxidised to a cystine. Ser-311, Phe-313, Asp-315, and Ser-317 together coordinate Ca(2+). Asn-354 carries N-linked (GlcNAc...) asparagine glycosylation. Cysteines 358 and 366 form a disulfide. His-477 contributes to the heme b binding site. 4 N-linked (GlcNAc...) asparagine glycosylation sites follow: Asn-551, Asn-592, Asn-662, and Asn-673. A disulfide bond links Cys-682 and Cys-705.

It belongs to the peroxidase family. Heme b is required as a cofactor. In terms of tissue distribution, expressed in the hypodermis and gland cells of the pharynx. Specifically, there is low and transient expression from the distal bulb of the pharynx to the anterior of the buccal cavity. Whole body expression levels increase upon entry into the dauer phase.

The protein localises to the secreted. It carries out the reaction 2 a phenolic donor + H2O2 = 2 a phenolic radical donor + 2 H2O. In terms of biological role, peroxidase which is involved in maintaining the cuticle integrity in the hypodermis and pharynx. It thus plays a role in conferring resistance against Gram-positive bacteria such as E.faecalis, S.aureus and C.diphtheriae, and yeast such as C.albicans. This Caenorhabditis elegans protein is Heme peroxidase 2.